Reading from the N-terminus, the 104-residue chain is Large ribosomal subunit protein eL31 (104 aa).

The protein belongs to the eukaryotic ribosomal protein eL31 family.

The protein is Large ribosomal subunit protein eL31 (rpl31e) of Aeropyrum pernix (strain ATCC 700893 / DSM 11879 / JCM 9820 / NBRC 100138 / K1).